An 81-amino-acid chain; its full sequence is Teretoxin Tsu6.8 (81 aa).

The N-terminal stretch at 1 to 21 (MATSGRLLCLCLVLGLIFESL) is a signal peptide. Residues 22-45 (GHPVMGEKRAGENASPSARSLPKR) constitute a propeptide that is removed on maturation.

The protein belongs to the teretoxin M (TM) superfamily. Post-translationally, contains 3 disulfide bonds. In terms of tissue distribution, expressed by the venom duct.

Its subcellular location is the secreted. The polypeptide is Teretoxin Tsu6.8 (Terebra subulata (Chocolate spotted auger)).